We begin with the raw amino-acid sequence, 562 residues long: MRDSSSPARPSLTQLPAWQALKSHFETMRDRHLRDLFAADPRRGERLVAEGAGVYLDYSKNRITDETLRLLLQLAREAGVEARRDAMFAGERINLTENRAVLHSALRAPRGAAVTVDGTNVVQEVQEVLDRMSAFADRVRAGTWLGATGKPIRNIVNIGIGGSDLGPVMAYEALKFYADRRLTLRFVSNVDGTDLVEKTRDLDPAETLFIVSSKTFTTLETMANAQSARAWLLAGLENVPDENAAIARPIISRHFVAVSTNAAEVERFGIDTANMFGFWDWVGGRYSVDSAIGLSLMIAIGPNGFRDFLAGFHAMDEHFRSAPLEQNLPVLLGVLGVWYRNFFGAQTYAVLPYDQYLAYFPTYLQQLDMESNGKHVTLDGQPVDYDTGPVVWGQPGTNGQHAFYQLIHQGTTLIPCDFLGFCQTLNPLPTPGGPSHHDLLMANMFAQTEALAFGKSLEQVQAEGVAADLAPHRVFEGNRPTNTLLLDRLTPRTLGTLIALYEHKVFVQGAIWNINSFDQWGVELGKVLASKIVPELEAPGEPELKHDSSTNALIRRYRARRR.

Glu-370 acts as the Proton donor in catalysis. Active-site residues include His-401 and Lys-526.

Belongs to the GPI family.

The protein resides in the cytoplasm. The catalysed reaction is alpha-D-glucose 6-phosphate = beta-D-fructose 6-phosphate. The protein operates within carbohydrate biosynthesis; gluconeogenesis. It participates in carbohydrate degradation; glycolysis; D-glyceraldehyde 3-phosphate and glycerone phosphate from D-glucose: step 2/4. Functionally, catalyzes the reversible isomerization of glucose-6-phosphate to fructose-6-phosphate. This is Glucose-6-phosphate isomerase from Deinococcus geothermalis (strain DSM 11300 / CIP 105573 / AG-3a).